Consider the following 564-residue polypeptide: Proline--tRNA ligase (564 aa).

This sequence belongs to the class-II aminoacyl-tRNA synthetase family. ProS type 1 subfamily. Homodimer.

Its subcellular location is the cytoplasm. It carries out the reaction tRNA(Pro) + L-proline + ATP = L-prolyl-tRNA(Pro) + AMP + diphosphate. Its function is as follows. Catalyzes the attachment of proline to tRNA(Pro) in a two-step reaction: proline is first activated by ATP to form Pro-AMP and then transferred to the acceptor end of tRNA(Pro). As ProRS can inadvertently accommodate and process non-cognate amino acids such as alanine and cysteine, to avoid such errors it has two additional distinct editing activities against alanine. One activity is designated as 'pretransfer' editing and involves the tRNA(Pro)-independent hydrolysis of activated Ala-AMP. The other activity is designated 'posttransfer' editing and involves deacylation of mischarged Ala-tRNA(Pro). The misacylated Cys-tRNA(Pro) is not edited by ProRS. This chain is Proline--tRNA ligase, found in Thermosipho melanesiensis (strain DSM 12029 / CIP 104789 / BI429).